The sequence spans 524 residues: Serine/threonine-protein kinase PAK 2 (524 aa).

The tract at residues 1–81 is disordered; the sequence is MSDNGELEDK…PEISPPSDFE (81 aa). Ser2 is modified (N-acetylserine). Ser2, Ser20, Ser55, and Ser58 each carry phosphoserine. Thr60 is subject to Phosphothreonine. Lys62 is subject to N6-acetyllysine. Ser64 carries the post-translational modification Phosphoserine. Residues 67–81 are compositionally biased toward basic and acidic residues; it reads KEKERPEISPPSDFE. The segment at 69-112 is GTPase-binding; it reads KERPEISPPSDFEHTIHVGFDAVTGEFTGMPEQWARLLQTSNIT. The segment at 69–137 is autoregulatory region; it reads KERPEISPPS…KFYDSNTVKQ (69 aa). Positions 74–87 constitute a CRIB domain; that stretch reads ISPPSDFEHTIHVG. Lys128 is modified (N6-acetyllysine). Phosphothreonine is present on Thr134. Tyr139 is subject to Phosphotyrosine. Position 141 is a phosphoserine (Ser141). A disordered region spans residues 142-188; that stretch reads FTPPEKDGFPSGTPALNTKGSETSAVVTEEDDDDEDAAPPVIAPRPD. Thr143 carries the phosphothreonine modification. Residue Ser152 is modified to Phosphoserine. A phosphothreonine mark is found at Thr154, Thr159, and Thr169. The span at 155 to 167 shows a compositional bias: polar residues; sequence PALNTKGSETSAV. The span at 169–178 shows a compositional bias: acidic residues; that stretch reads TEEDDDDEDA. Ser197 carries the post-translational modification Phosphoserine. The interval 204-228 is disordered; the sequence is APVGDSNVDSGAKSSDKQKKKAKMT. The short motif at 245–251 is the Nuclear localization signal element; the sequence is PKKKYTR. Positions 249 to 499 constitute a Protein kinase domain; the sequence is YTRYEKIGQG…SAKELLQHPF (251 aa). Residues 255 to 263 and Lys278 contribute to the ATP site; that span reads IGQGASGTV. Arg367 acts as the Proton acceptor in catalysis. A Phosphothreonine; by autocatalysis modification is found at Thr402.

This sequence belongs to the protein kinase superfamily. STE Ser/Thr protein kinase family. STE20 subfamily. In terms of assembly, interacts tightly with GTP-bound but not GDP-bound CDC42/p21 and RAC1. Interacts with SH3MD4. Interacts with SCRIB. Interacts with ARHGEF7 and GIT1. PAK-2p34 interacts with ARHGAP10. Interacts with RAC1. Post-translationally, full-length PAK2 is autophosphorylated when activated by CDC42/p21. Following cleavage, both peptides, PAK-2p27 and PAK-2p34, become highly autophosphorylated. Autophosphorylation of PAK-2p27 can occur in the absence of any effectors and is dependent on phosphorylation of Thr-402, because PAK-2p27 is acting as an exogenous substrate. During apoptosis proteolytically cleaved by caspase-3 or caspase-3-like proteases to yield active PAK-2p34. In terms of processing, ubiquitinated, leading to its proteasomal degradation.

Its subcellular location is the cytoplasm. It localises to the nucleus. The protein localises to the perinuclear region. It is found in the membrane. The catalysed reaction is L-seryl-[protein] + ATP = O-phospho-L-seryl-[protein] + ADP + H(+). It carries out the reaction L-threonyl-[protein] + ATP = O-phospho-L-threonyl-[protein] + ADP + H(+). With respect to regulation, activated by binding small G proteins. Binding of GTP-bound CDC42 or RAC1 to the autoregulatory region releases monomers from the autoinhibited dimer, enables phosphorylation of Thr-402 and allows the kinase domain to adopt an active structure. Following caspase cleavage, autophosphorylated PAK-2p34 is constitutively active. Functionally, serine/threonine protein kinase that plays a role in a variety of different signaling pathways including cytoskeleton regulation, cell motility, cell cycle progression, apoptosis or proliferation. Acts as a downstream effector of the small GTPases CDC42 and RAC1. Activation by the binding of active CDC42 and RAC1 results in a conformational change and a subsequent autophosphorylation on several serine and/or threonine residues. Full-length PAK2 stimulates cell survival and cell growth. Phosphorylates MAPK4 and MAPK6 and activates the downstream target MAPKAPK5, a regulator of F-actin polymerization and cell migration. Phosphorylates JUN and plays an important role in EGF-induced cell proliferation. Phosphorylates many other substrates including histone H4 to promote assembly of H3.3 and H4 into nucleosomes, BAD, ribosomal protein S6, or MBP. Phosphorylates CASP7, thereby preventing its activity. Additionally, associates with ARHGEF7 and GIT1 to perform kinase-independent functions such as spindle orientation control during mitosis. On the other hand, apoptotic stimuli such as DNA damage lead to caspase-mediated cleavage of PAK2, generating PAK-2p34, an active p34 fragment that translocates to the nucleus and promotes cellular apoptosis involving the JNK signaling pathway. Caspase-activated PAK2 phosphorylates MKNK1 and reduces cellular translation. This chain is Serine/threonine-protein kinase PAK 2 (Pak2), found in Mus musculus (Mouse).